A 166-amino-acid chain; its full sequence is Lithostathine-1-alpha (166 aa).

A signal peptide spans M1–G22. Q23 is modified (pyrrolidone carboxylic acid). An O-linked (GalNAc) threonine glycan is attached at T27. The region spanning I34–F164 is the C-type lectin domain. 3 disulfides stabilise this stretch: C36-C47, C64-C162, and C137-C154.

In terms of processing, the composition of the O-linked carbohydrate on Thr-27 is complex and varied. In the crystallographic structure, the attached sugar appears to be N-acetylglucosamine, typical of an intracellular protein, rather than N-acetylgalactosamine. As to expression, in pancreatic acinar cells and, in lower levels, in brain. Enhanced expression of PSP-related transcripts and intraneuronal accumulation of PSP-like proteins is found in brain from Alzheimer disease and Down syndrome patients.

The protein resides in the secreted. In terms of biological role, might act as an inhibitor of spontaneous calcium carbonate precipitation. May be associated with neuronal sprouting in brain, and with brain and pancreas regeneration. This Homo sapiens (Human) protein is Lithostathine-1-alpha (REG1A).